A 262-amino-acid polypeptide reads, in one-letter code: Sperm microtubule inner protein 6 (262 aa).

This sequence belongs to the SPMIP6 family. As to quaternary structure, microtubule inner protein component of sperm flagellar doublet microtubules. Interacts with alpha-tubulin.

It localises to the cytoplasm. The protein resides in the cytoskeleton. The protein localises to the nucleus. Its subcellular location is the mitochondrion. It is found in the flagellum axoneme. May participate in intramanchette transport and midpiece formation of the sperm tail. May play a potential role in somatic cell proliferation. The chain is Sperm microtubule inner protein 6 (SPMIP6) from Macaca fascicularis (Crab-eating macaque).